We begin with the raw amino-acid sequence, 362 residues long: Probable dual-specificity RNA methyltransferase RlmN (362 aa).

Glutamate 105 serves as the catalytic Proton acceptor. The Radical SAM core domain occupies 111-344; that stretch reads HEYGNSICVT…VTIRREQGHD (234 aa). A disulfide bridge links cysteine 118 with cysteine 349. Positions 125, 129, and 132 each coordinate [4Fe-4S] cluster. S-adenosyl-L-methionine is bound by residues 175–176, serine 207, 230–232, and asparagine 306; these read GE and SLH. Residue cysteine 349 is the S-methylcysteine intermediate of the active site.

This sequence belongs to the radical SAM superfamily. RlmN family. The cofactor is [4Fe-4S] cluster.

It localises to the cytoplasm. It carries out the reaction adenosine(2503) in 23S rRNA + 2 reduced [2Fe-2S]-[ferredoxin] + 2 S-adenosyl-L-methionine = 2-methyladenosine(2503) in 23S rRNA + 5'-deoxyadenosine + L-methionine + 2 oxidized [2Fe-2S]-[ferredoxin] + S-adenosyl-L-homocysteine. The enzyme catalyses adenosine(37) in tRNA + 2 reduced [2Fe-2S]-[ferredoxin] + 2 S-adenosyl-L-methionine = 2-methyladenosine(37) in tRNA + 5'-deoxyadenosine + L-methionine + 2 oxidized [2Fe-2S]-[ferredoxin] + S-adenosyl-L-homocysteine. Specifically methylates position 2 of adenine 2503 in 23S rRNA and position 2 of adenine 37 in tRNAs. The protein is Probable dual-specificity RNA methyltransferase RlmN of Bacillus thuringiensis subsp. konkukian (strain 97-27).